A 271-amino-acid polypeptide reads, in one-letter code: MTRWARVSTTYNKRPLPATSWEDMKKGSFEGTSQNLPKRKQLEANRLSLKNDAPQAKHKKNKKKKEYLNEDVNGFMEYLRQNSQMVHNGQIIATDSEEVREEIAVALKKDSRREGRRLKRQAAKKNAMVCFHCRKPGHGIADCPAALENQDMGTGICYRCGSTEHEITKCKAKVDPALGEFPFAKCFVCGEMGHLSRSCPDNPKGLYADGGGCKLCGSVEHLKKDCPESQNSERMVTVGRWAKGMSADYEEILDVPKPQKPKTKIPKVVNF.

Residues 1–40 (MTRWARVSTTYNKRPLPATSWEDMKKGSFEGTSQNLPKRK) are disordered. Ser48 carries the post-translational modification Phosphoserine. CCHC-type zinc fingers lie at residues 128-145 (MVCFHCRKPGHGIADCPA), 155-172 (GICYRCGSTEHEITKCKA), 184-201 (AKCFVCGEMGHLSRSCPD), and 211-228 (GGCKLCGSVEHLKKDCPE).

It is found in the nucleus. Its subcellular location is the nucleolus. Functionally, may down-regulate transcription mediated by NF-kappa-B and the serum response element. This chain is Zinc finger CCHC domain-containing protein 9 (ZCCHC9), found in Homo sapiens (Human).